A 307-amino-acid chain; its full sequence is Heparan sulfate glucosamine 3-O-sulfotransferase 1 (307 aa).

The N-terminal stretch at 1–20 (MAALLLGAVLLVAQPQLVPS) is a signal peptide. Asn48 carries an N-linked (GlcNAc...) asparagine glycan. Residues 64–68 (KGGTR), Arg147, and Ser155 each bind 3'-phosphoadenylyl sulfate. Residues Asn192, Asn242, and Asn249 are each glycosylated (N-linked (GlcNAc...) asparagine). Tyr255 contributes to the 3'-phosphoadenylyl sulfate binding site. Cys256 and Cys265 form a disulfide bridge. 270–274 (KGRAH) is a binding site for 3'-phosphoadenylyl sulfate.

It belongs to the sulfotransferase 1 family. Highly expressed in the brain and kidney and weakly expressed in the heart, lung and placenta.

The protein resides in the golgi apparatus lumen. The enzyme catalyses alpha-D-glucosaminyl-[heparan sulfate](n) + 3'-phosphoadenylyl sulfate = 3-sulfo-alpha-D-glucosaminyl-[heparan sulfate](n) + adenosine 3',5'-bisphosphate + H(+). Functionally, sulfotransferase that utilizes 3'-phospho-5'-adenylyl sulfate (PAPS) to catalyze the transfer of a sulfo group to position 3 of glucosamine residues in heparan. Catalyzes the rate limiting step in the biosynthesis of heparan sulfate (HSact). This modification is a crucial step in the biosynthesis of anticoagulant heparan sulfate as it completes the structure of the antithrombin pentasaccharide binding site. This Homo sapiens (Human) protein is Heparan sulfate glucosamine 3-O-sulfotransferase 1 (HS3ST1).